Consider the following 773-residue polypeptide: Ergothioneine biosynthesis protein 1 (773 aa).

The interval 16–322 (PESIEQSLKR…ESTIADYSTY (307 aa)) is L-histidine N(alpha)-methyltransferase. Y51 serves as a coordination point for L-histidine. S-adenosyl-L-methionine is bound by residues G85, K91, D112, and 142 to 143 (CF). L-histidine is bound by residues N172, Y212, and 287 to 289 (EES). Positions 347 to 772 (ALRKVWLFIT…YAWIGARLVK (426 aa)) are hercynylcysteine S-oxide synthase. Fe cation contacts are provided by H382, H476, and H480.

The protein in the N-terminal section; belongs to the methyltransferase superfamily. EgtD family. In the C-terminal section; belongs to the EgtB family. Requires Fe(2+) as cofactor.

The protein resides in the cytoplasm. It localises to the nucleus. It catalyses the reaction L-histidine + 3 S-adenosyl-L-methionine = hercynine + 3 S-adenosyl-L-homocysteine + 3 H(+). The enzyme catalyses hercynine + L-cysteine + O2 = S-(hercyn-2-yl)-L-cysteine S-oxide + H2O. It functions in the pathway amino-acid biosynthesis; ergothioneine biosynthesis. Its function is as follows. Catalyzes the SAM-dependent triple methylation of the alpha-amino group of histidine to form hercynine and subsequent conjugation with cysteine and oxygen to form hercynylcysteine sulfoxide, the first two steps in the biosynthesis pathway of ergothioneine. May play a role in meiosis. In Schizosaccharomyces pombe (strain 972 / ATCC 24843) (Fission yeast), this protein is Ergothioneine biosynthesis protein 1.